The chain runs to 276 residues: Small ribosomal subunit protein uS2 (276 aa).

Disordered stretches follow at residues 209–233 (AQEA…AADV) and 252–276 (VDWS…SSWE). The span at 211-231 (EAAAAAQAAKETAEPTTEGAA) shows a compositional bias: low complexity.

It belongs to the universal ribosomal protein uS2 family. In terms of assembly, component of the small ribosomal subunit. Mature ribosomes consist of a small (40S) and a large (60S) subunit. The 40S subunit contains about 33 different proteins and 1 molecule of RNA (18S). The 60S subunit contains about 49 different proteins and 3 molecules of RNA (25S, 5.8S and 5S). Interacts with RPS21.

It localises to the cytoplasm. Its function is as follows. Required for the assembly and/or stability of the 40S ribosomal subunit. Required for the processing of the 20S rRNA-precursor to mature 18S rRNA in a late step of the maturation of 40S ribosomal subunits. This Mycosarcoma maydis (Corn smut fungus) protein is Small ribosomal subunit protein uS2.